The following is a 171-amino-acid chain: L-methionine sulfoximine/L-methionine sulfone acetyltransferase (171 aa).

Residues 1–163 enclose the N-acetyltransferase domain; it reads MTIRFADKAD…DLTFMQLQLD (163 aa). Substrate-binding positions include 72-74 and 82-84; these read RSF and EHS. Acetyl-CoA is bound by residues 85-87, 93-98, N124, and S133; these read VYV and GKGLGR.

In terms of assembly, homodimer.

The enzyme catalyses L-methionine sulfoximine + acetyl-CoA = N-acetyl-L-methionine sulfoximine + CoA + H(+). The catalysed reaction is L-methionine sulfone + acetyl-CoA = N-acetyl-L-methionine sulfone + CoA + H(+). Its function is as follows. Plays a role in the resistance against the toxic effects of L-methionine sulfoximine (MSX), a rare amino acid which inhibits glutamine synthetase (GlnA). Catalyzes the acetylation of MSX. It can also use L-methionine sulfone (MSO). Also catalyzes the acylation of free L-amino acids using an acyl-CoA as acyl donor. This chain is L-methionine sulfoximine/L-methionine sulfone acetyltransferase (yncA), found in Salmonella typhimurium (strain LT2 / SGSC1412 / ATCC 700720).